Here is a 337-residue protein sequence, read N- to C-terminus: Metacaspase III c (337 aa).

Propeptides lie at residues 1–6 (MGFLRR) and 116–125 (VPPAATGTRR). Position 202 is a cysteine sulfenic acid (-SOH) (Cys-202). Residues Cys-202 and Cys-259 are joined by a disulfide bond. His-207 is a catalytic residue. The Ca(2+) site is built by Asp-224, Asp-240, and Asp-241. Cys-264 is a catalytic residue. Position 271 (Asp-271) interacts with Ca(2+). Positions 290–337 (NFDFKKLLGKFGIDDFDKFGGEALGKINGDALGKVGKDALGKLNKFFG) are excised as a propeptide.

This sequence belongs to the peptidase C14B family. In terms of processing, auto-proteolytic cleavage into a large and a small subunit which probably remain associated by non-covalent bonds. Post-translationally, following oxidative stress, the oxidation of Cys-202 leads to the formation of a disulfide bond between Cys-202 and Cys-259 which enhances catalytic activity.

Activated by Ca(2+). Functionally, cysteine protease that cleaves specifically after arginine residues. The protein is Metacaspase III c of Phaeodactylum tricornutum (strain CCAP 1055/1).